A 242-amino-acid polypeptide reads, in one-letter code: Segregation and condensation protein A (242 aa).

The protein belongs to the ScpA family. Component of a cohesin-like complex composed of ScpA, ScpB and the Smc homodimer, in which ScpA and ScpB bind to the head domain of Smc. The presence of the three proteins is required for the association of the complex with DNA.

It localises to the cytoplasm. In terms of biological role, participates in chromosomal partition during cell division. May act via the formation of a condensin-like complex containing Smc and ScpB that pull DNA away from mid-cell into both cell halves. This chain is Segregation and condensation protein A, found in Streptococcus pneumoniae serotype 19F (strain G54).